The primary structure comprises 161 residues: Zinc finger protein KNUCKLES (161 aa).

Residues 1–33 (MAEPPPSYLHFVGPAKTRSSSKRHSFSSSAHPA) are disordered. The segment at 38–60 (FPCQYCPRKFYTSQALGGHQNAH) adopts a C2H2-type zinc-finger fold. A disordered region spans residues 142–161 (GGNGVMEEDEPLDLDLSLRL). Residues 155-159 (LDLSL) carry the EAR-like (transcriptional repression) motif.

First expressed in developing carpel primordia, and later in stamens and ovules of flower buds.

It is found in the nucleus. Functionally, may function as a transcriptional repressor of cellular proliferation that regulates floral determinacy and relative size of basal pattern elements along the proximo-distal axis of the developing gynoecium. The sequence is that of Zinc finger protein KNUCKLES (KNU) from Arabidopsis thaliana (Mouse-ear cress).